A 142-amino-acid chain; its full sequence is Large ribosomal subunit protein uL13 (142 aa).

Belongs to the universal ribosomal protein uL13 family. In terms of assembly, part of the 50S ribosomal subunit.

Functionally, this protein is one of the early assembly proteins of the 50S ribosomal subunit, although it is not seen to bind rRNA by itself. It is important during the early stages of 50S assembly. The polypeptide is Large ribosomal subunit protein uL13 (Azotobacter vinelandii (strain DJ / ATCC BAA-1303)).